The primary structure comprises 149 residues: Deoxyuridine 5'-triphosphate nucleotidohydrolase (149 aa).

Residues 68-70 (RSG), Asn-81, 85-87 (TID), and Lys-95 each bind substrate.

Belongs to the dUTPase family. Mg(2+) is required as a cofactor.

The catalysed reaction is dUTP + H2O = dUMP + diphosphate + H(+). It functions in the pathway pyrimidine metabolism; dUMP biosynthesis; dUMP from dCTP (dUTP route): step 2/2. Its function is as follows. This enzyme is involved in nucleotide metabolism: it produces dUMP, the immediate precursor of thymidine nucleotides and it decreases the intracellular concentration of dUTP so that uracil cannot be incorporated into DNA. The polypeptide is Deoxyuridine 5'-triphosphate nucleotidohydrolase (Bdellovibrio bacteriovorus (strain ATCC 15356 / DSM 50701 / NCIMB 9529 / HD100)).